A 701-amino-acid polypeptide reads, in one-letter code: C6 finger domain transcription factor nscR (701 aa).

Positions C17–C43 form a DNA-binding region, zn(2)-C6 fungal-type.

It localises to the nucleus. In terms of biological role, transcription factor that specifically regulates the neosartoricin B biosynthesis gene cluster. The sequence is that of C6 finger domain transcription factor nscR from Arthroderma benhamiae (strain ATCC MYA-4681 / CBS 112371) (Trichophyton mentagrophytes).